Reading from the N-terminus, the 502-residue chain is Lysine--tRNA ligase (502 aa).

Mg(2+)-binding residues include E409 and E416.

The protein belongs to the class-II aminoacyl-tRNA synthetase family. Homodimer. The cofactor is Mg(2+).

Its subcellular location is the cytoplasm. The enzyme catalyses tRNA(Lys) + L-lysine + ATP = L-lysyl-tRNA(Lys) + AMP + diphosphate. The chain is Lysine--tRNA ligase from Shouchella clausii (strain KSM-K16) (Alkalihalobacillus clausii).